We begin with the raw amino-acid sequence, 346 residues long: Holliday junction branch migration complex subunit RuvB (346 aa).

Residues 1–182 (MTRVISGEPQ…FGIPIRLEFY (182 aa)) form a large ATPase domain (RuvB-L) region. 9 residues coordinate ATP: Leu21, Arg22, Gly63, Lys66, Thr67, Thr68, Arg172, Tyr182, and Arg219. A Mg(2+)-binding site is contributed by Thr67. The interval 183–253 (TPAELRHVLQ…AAAMALARLE (71 aa)) is small ATPAse domain (RuvB-S). Residues 256–346 (ESGLDSLDRR…QAQGALFDEG (91 aa)) are head domain (RuvB-H). DNA-binding residues include Arg292, Arg311, and Arg316.

This sequence belongs to the RuvB family. In terms of assembly, homohexamer. Forms an RuvA(8)-RuvB(12)-Holliday junction (HJ) complex. HJ DNA is sandwiched between 2 RuvA tetramers; dsDNA enters through RuvA and exits via RuvB. An RuvB hexamer assembles on each DNA strand where it exits the tetramer. Each RuvB hexamer is contacted by two RuvA subunits (via domain III) on 2 adjacent RuvB subunits; this complex drives branch migration. In the full resolvosome a probable DNA-RuvA(4)-RuvB(12)-RuvC(2) complex forms which resolves the HJ.

The protein localises to the cytoplasm. The catalysed reaction is ATP + H2O = ADP + phosphate + H(+). The RuvA-RuvB-RuvC complex processes Holliday junction (HJ) DNA during genetic recombination and DNA repair, while the RuvA-RuvB complex plays an important role in the rescue of blocked DNA replication forks via replication fork reversal (RFR). RuvA specifically binds to HJ cruciform DNA, conferring on it an open structure. The RuvB hexamer acts as an ATP-dependent pump, pulling dsDNA into and through the RuvAB complex. RuvB forms 2 homohexamers on either side of HJ DNA bound by 1 or 2 RuvA tetramers; 4 subunits per hexamer contact DNA at a time. Coordinated motions by a converter formed by DNA-disengaged RuvB subunits stimulates ATP hydrolysis and nucleotide exchange. Immobilization of the converter enables RuvB to convert the ATP-contained energy into a lever motion, pulling 2 nucleotides of DNA out of the RuvA tetramer per ATP hydrolyzed, thus driving DNA branch migration. The RuvB motors rotate together with the DNA substrate, which together with the progressing nucleotide cycle form the mechanistic basis for DNA recombination by continuous HJ branch migration. Branch migration allows RuvC to scan DNA until it finds its consensus sequence, where it cleaves and resolves cruciform DNA. This Caulobacter vibrioides (strain ATCC 19089 / CIP 103742 / CB 15) (Caulobacter crescentus) protein is Holliday junction branch migration complex subunit RuvB.